The chain runs to 785 residues: MRVSFNWLQEYVEFDFTPSELAEKLTMAGFEVEHVEDRRTWAAGVVVGRVLECAPHPQADRLHVCRVDIGTGRLLNIVCGAPNARAGIYAPVAPVGTYLPIKDLKLRAASIRGMPSEGMLCSLEELGLEKASEGIHIFPEASLPLGLDVGPLLGLDDAILEVASTANRADALSMVGIAREVAALTGGILRLPLVDAPLVPRGDLAARIAEPEACPVYTATLLEEVAVGPAPDWLRERLEKAGMRPINNVVDVTNYVLLEWGQPLHAFDADRLAAGTLGVRFAHKGEQLVTLDGTERPLTPANLLITAGERPVALAGVMGGEATEVGGQTRRIVLEAAIFDPPAIRRSARVFALRTEASARYERGVDASALEHALGRALQLLADCAGARAVVQATDDYRRRENRVVSLRPERLAQILGEDIPDAEIARVLKNLGFDVQTGPQEFAVTVPGHRLRDIEREIDLIEEVARVVGYDRFAPTLPPPADGGYLPFEDFIERRVRSLCQGAGLTEVVTYSLAPDRDQQPVVLSNPLSAELNSLRTNLIDGLLEILRFNRSQGNMPFHAFEVGVVFLRSDEGIFESGRLGAVMCGEPAVGDWQKLTPPFDWFAAKGVLAAILQPWQIEVEYQADRRDERLHPGRTASLWVSGERLGTLGQLHPRLASRLDLPEQTFVFEIDLDFLIDLVRERPVEFRSFSPFPPAARDLSFYAREALTVFEFERLIREQGEPLLESVALLDEFKGQGVPEGCRSLAFRMVYRSDHTLTEEEITAVHQRVRQALAERYSVDLRS.

A tRNA-binding domain is found at 39–150 (RTWAAGVVVG…ASLPLGLDVG (112 aa)). The B5 domain occupies 400 to 476 (RENRVVSLRP…RVVGYDRFAP (77 aa)). Mg(2+) is bound by residues Asp-454, Asp-460, Glu-463, and Glu-464. The 93-residue stretch at 692 to 784 (SPFPPAARDL…LAERYSVDLR (93 aa)) folds into the FDX-ACB domain.

Belongs to the phenylalanyl-tRNA synthetase beta subunit family. Type 1 subfamily. Tetramer of two alpha and two beta subunits. The cofactor is Mg(2+).

The protein resides in the cytoplasm. It catalyses the reaction tRNA(Phe) + L-phenylalanine + ATP = L-phenylalanyl-tRNA(Phe) + AMP + diphosphate + H(+). The protein is Phenylalanine--tRNA ligase beta subunit of Gloeobacter violaceus (strain ATCC 29082 / PCC 7421).